The sequence spans 552 residues: Glutamate--tRNA ligase (552 aa).

A 'HIGH' region motif is present at residues 41–51 (PSPTGFQHIGG). Residues 293–297 (KLSKR) carry the 'KMSKS' region motif. Lys-296 is a binding site for ATP.

The protein belongs to the class-I aminoacyl-tRNA synthetase family. Glutamate--tRNA ligase type 1 subfamily. Monomer.

The protein resides in the cytoplasm. It carries out the reaction tRNA(Glu) + L-glutamate + ATP = L-glutamyl-tRNA(Glu) + AMP + diphosphate. Catalyzes the attachment of glutamate to tRNA(Glu) in a two-step reaction: glutamate is first activated by ATP to form Glu-AMP and then transferred to the acceptor end of tRNA(Glu). In Clostridium perfringens (strain SM101 / Type A), this protein is Glutamate--tRNA ligase.